A 2560-amino-acid polypeptide reads, in one-letter code: Plipastatin synthase subunit B (2560 aa).

The interval 7–310 (IQDIYPLSHM…NTVPVRIRSA (304 aa)) is condensation 1. Residues 7–1042 (IQDIYPLSHM…AVKLMSLKEH (1036 aa)) are domain 1 (tyrosine-activating). The segment at 496 to 889 (TYRQLQVRAN…QAPGVKEAAV (394 aa)) is adenylation 1. One can recognise a Carrier 1 domain in the interval 965 to 1040 (APRTLIEADL…SMAVKLMSLK (76 aa)). S1000 is modified (O-(pantetheine 4'-phosphoryl)serine). The condensation 2 stretch occupies residues 1052-1342 (QRDVYPLSFS…NTLAMRSKPE (291 aa)). The segment at 1052–2553 (QRDVYPLSFS…DLTLDELSEI (1502 aa)) is domain 2 (D-allo-threonine-activating). The adenylation 2 stretch occupies residues 1527-1927 (TYRDLNEKAE…QYPMIKEAAV (401 aa)). A Carrier 2 domain is found at 2006 to 2080 (SPRNEIETVM…ELSARVRKDV (75 aa)). O-(pantetheine 4'-phosphoryl)serine is present on S2041. Residues 2088-2553 (VEGEITWTPI…DLTLDELSEI (466 aa)) form an epimerization region.

The protein belongs to the ATP-dependent AMP-binding enzyme family. Pantetheine 4'-phosphate serves as cofactor.

Functionally, this protein is a multifunctional enzyme, able to activate and polymerize the amino acids Tyr and Thr as part of the biosynthesis of the lipopeptide antibiotic plipastatin. The Thr residue is further converted to the D-allo-isomer form. The activation sites for these amino acids consist of individual domains. The sequence is that of Plipastatin synthase subunit B (ppsB) from Bacillus subtilis (strain 168).